The sequence spans 758 residues: Putative transcriptional regulatory protein YJL206C (758 aa).

Positions 47 to 73 form a DNA-binding region, zn(2)-C6 fungal-type; sequence CIACRKRKVRCSGNIPCRLCQTNSYEC.

It belongs to the ASG1 family.

Its subcellular location is the nucleus. This is Putative transcriptional regulatory protein YJL206C from Saccharomyces cerevisiae (strain ATCC 204508 / S288c) (Baker's yeast).